Reading from the N-terminus, the 1298-residue chain is MAKFLRLHIRGIRSVGDEDHDVHKIDFLSPCTLISGPNGTGKTTTIEALNFVTTGQMPTQKKQNFIHSTDVARKTRVDASVTLEFIDVKGRECTAVRRLVVTSGTKAAALAEEHTLAIKYPDGTVNTLSSKVCDFNTALLKHLGVPRAVFKYVIFCHQEDSTWPLSEPKELKKRFDDIFQLTKFVKAQERMKKIVLDFKKEMQTHEMSKQLYETHVRDKLVARQNQEECERKISKRKEETDELKERKANGQKKIEEMRTSIHELEDTLTSFKKTELERQNLKKQLSLIRVEPYFGTEEELKREIEEFRGSEGRSYGEERARIQKKIGKNNQERQELSQKKTEFENRISSLKAEVIHCQSLKYDLERLENQLRSELDLEHDADIDIEIDNAITLKIRGMSDKARMIAKNCAELQSNLRTAQEAATKIEVEMKTLQNEKVKLEKEVEQLKFKIKQGQNATAGMKDLLKKEEALRKSLADLPLLDENALTECKLKREKYLKQLDILKKKCAEAEKNAEKDREKESLKQTLSIARKKMTAYQRIYDNNWQGLIGQAPDFPWTPILSKTFHKLRNDKKIMEEDLRDVQLNVQKLETMQHQYRKQEESLTAQELKLSENIFEACSCEAEEVSEKLENLRKRLKKARKDLAPLSAKSNLYDSYIEESKSSGCCPLCDRDFKTKKEINEFSKKLENMTLSFPTEQEELEKLVSKLEKEEIIIVKAEGQANELQRIVKELKEVREKNRKLSTEMAEEKSNLSKNEKQLETVNAKLKLAEDLQTDVGVIQQLYEQTEENEKRYEQLVSESDSSDGLSYTELRKKVEDKDEEYRKIVQEGEELQKCSEERNKLQSKLNELGTHRVSLGEAAAQAGAFAEQLETKIKEIQECITAISQKRNEDLPDAQFKKDDLTRNVSSKEEEKKKAEMEVQMMKKELDQKIFHRKSLFKKVQEGGLCERQLMDKENNIATLNASLEENQQRQKRFEEDLRSFDSSHQRESILKDQLTRMIIENKIKELKRTLATFDGQINEDRITEQKQAYNKLQNELRLIGNEEVKIYTQMQEYEKQKKIAEAKLSTKECQNAESNYRDAIIELAITKESISDLTKYRNCLDASLIQFHSEKMGRVNGIIDDLWRKVYNSTDITTIRIRSDATSETSSKKVAYEYNVMMVHETGTEVEMRGRCSAGQKMLASLLIRIALAEVFGGSCSMIALDEPTTNLDESKVEGMAIVLADIIAERRGFDENGKLRGRDMQMVVITHDERLVNRITISCRPEYIYCLGKDEHGISFLSKRYPDGTVKRVNTKRRF.

ATP contacts are provided by Arg-13, Asn-38, Gly-39, Gly-41, Lys-42, Thr-43, Thr-44, Ile-66, and Gln-158. Residue Thr-43 coordinates Mg(2+). Position 158 (Gln-158) interacts with Mg(2+). Coiled-coil stretches lie at residues 222–291 (ARQN…IRVE), 317–598 (EERA…QYRK), and 622–660 (AEEV…IEES). In terms of domain architecture, Zinc-hook spans 622-719 (AEEVSEKLEN…EEIIIVKAEG (98 aa)). Cys-666 and Cys-669 together coordinate Zn(2+). Coiled-coil stretches lie at residues 691–719 (LSFP…KAEG) and 754–1092 (KNEK…KESI).

It belongs to the SMC family. RAD50 subfamily. As to quaternary structure, component of the MRN complex composed of two heterodimers rad-50 and mre-11 associated with a single nbs-1. Zn(2+) is required as a cofactor.

Its subcellular location is the nucleus. It is found in the chromosome. The catalysed reaction is ATP + H2O = ADP + phosphate + H(+). Its function is as follows. Component of the MRN complex, which plays a central role in double-strand break (DSB) repair, DNA recombination, maintenance of telomere integrity and meiosis. The MRN complex is involved in the repair of DNA double-strand breaks (DSBs) via homologous recombination (HR), an error-free mechanism which primarily occurs during S and G2 phases. The complex (1) mediates the end resection of damaged DNA, which generates proper single-stranded DNA, a key initial steps in HR, and is (2) required for the recruitment of other repair factors and efficient activation of ATM and ATR upon DNA damage. The MRN complex possesses single-strand endonuclease activity and double-strand-specific 3'-5' exonuclease activity, which are provided by mre-11, to initiate end resection, which is required for single-strand invasion and recombination. Within the complex, rad-50 is both required to bind DNA ends and hold them in close proximity and regulate the activity of mre-11. Rad-50 provides an ATP-dependent control of mre-11 by positioning DNA ends into the mre-11 active site: ATP-binding induces a large structural change from an open form with accessible mre-11 nuclease sites into a closed form. This Caenorhabditis elegans protein is DNA repair protein rad-50 (rad-50).